A 292-amino-acid polypeptide reads, in one-letter code: N-acetylneuraminate lyase (292 aa).

Aceneuramate-binding residues include Ser46 and Thr47. Tyr135 (proton donor) is an active-site residue. Residue Lys163 is the Schiff-base intermediate with substrate of the active site. 5 residues coordinate aceneuramate: Thr165, Gly187, Asp189, Glu190, and Ser206.

Belongs to the DapA family. NanA subfamily. In terms of assembly, homotetramer.

Its subcellular location is the cytoplasm. The catalysed reaction is aceneuramate = aldehydo-N-acetyl-D-mannosamine + pyruvate. Its pathway is amino-sugar metabolism; N-acetylneuraminate degradation; D-fructose 6-phosphate from N-acetylneuraminate: step 1/5. In terms of biological role, catalyzes the reversible aldol cleavage of N-acetylneuraminic acid (sialic acid; Neu5Ac) to form pyruvate and N-acetylmannosamine (ManNAc) via a Schiff base intermediate. This is N-acetylneuraminate lyase from Lactiplantibacillus plantarum (strain ATCC BAA-793 / NCIMB 8826 / WCFS1) (Lactobacillus plantarum).